A 521-amino-acid chain; its full sequence is MGNCLAKKYGLVMKPQQNGERSVEIENRRRSTHQDPSKISTGTNQPPPWRNPAKHSGAAAILEKPYEDVKLFYTLSKELGRGQFGVTYLCTEKSTGKRFACKSISKKKLVTKGDKEDMRREIQIMQHLSGQPNIVEFKGAYEDEKAVNLVMELCAGGELFDRILAKGHYSERAAASVCRQIVNVVNICHFMGVMHRDLKPENFLLSSKDEKALIKATDFGLSVFIEEGRVYKDIVGSAYYVAPEVLKRRYGKEIDIWSAGIILYILLSGVPPFWAETEKGIFDAILEGEIDFESQPWPSISNSAKDLVRRMLTQDPKRRISAAEVLKHPWLREGGEASDKPIDSAVLSRMKQFRAMNKLKKLALKVIAENIDTEEIQGLKAMFANIDTDNSGTITYEELKEGLAKLGSRLTEAEVKQLMDAADVDGNGSIDYIEFITATMHRHRLESNENVYKAFQHFDKDGSGYITTDELEAALKEYGMGDDATIKEILSDVDADNDGRINYDEFCAMMRSGNPQQPRLF.

Gly-2 is lipidated: N-myristoyl glycine. A disordered region spans residues Pro-15–Ser-56. Over residues Arg-21–Pro-36 the composition is skewed to basic and acidic residues. A Protein kinase domain is found at Tyr-73–Leu-331. Residues Leu-79–Thr-87 and Lys-102 contribute to the ATP site. Asp-197 acts as the Proton acceptor in catalysis. Ser-237 carries the phosphoserine modification. The segment at Ala-337–Ile-367 is autoinhibitory domain. EF-hand domains lie at Glu-374–Arg-409, Leu-410–Leu-445, Glu-446–Gly-481, and Asp-482–Gln-516. Residues Asp-387, Asp-389, Ser-391, Thr-393, Glu-398, Asp-423, Asp-425, Asn-427, Ser-429, Glu-434, Asp-459, Asp-461, Ser-463, Tyr-465, Glu-470, Asp-494, Asp-496, Asp-498, Arg-500, and Glu-505 each coordinate Ca(2+).

It belongs to the protein kinase superfamily. Ser/Thr protein kinase family. CDPK subfamily. As to quaternary structure, interacts with THI1. Interacts with FD and FDP. Post-translationally, autophosphorylated. In terms of tissue distribution, expressed in primary roots, leaves, inflorescences, siliques and guard cells. Expressed in the shoot apical meristem.

The protein localises to the cell membrane. It is found in the nucleus. Its subcellular location is the cytoplasm. It catalyses the reaction L-seryl-[protein] + ATP = O-phospho-L-seryl-[protein] + ADP + H(+). The catalysed reaction is L-threonyl-[protein] + ATP = O-phospho-L-threonyl-[protein] + ADP + H(+). With respect to regulation, activated by calcium. Autophosphorylation may play an important role in the regulation of the kinase activity. Repressed by THI1 through a negative regulation of the autophosphorylation activity in the presence of Ca(2+). In terms of biological role, ca(2+)-dependent protein kinase. Negative regulator of stomatal closure and slow anion currents. Unable to phosphorylate THI1 in vitro, but the kinase activity is essential for the stomatal closure regulation. Phosphorylates FD. May play a role in signal transduction pathways that involve calcium as a second messenger. The protein is Calcium-dependent protein kinase 33 of Arabidopsis thaliana (Mouse-ear cress).